The chain runs to 257 residues: Glutamate racemase (257 aa).

Residues 12–13 (DS) and 44–45 (YG) contribute to the substrate site. The active-site Proton donor/acceptor is Cys-75. 76–77 (NT) contacts substrate. Cys-185 serves as the catalytic Proton donor/acceptor. 186-187 (TH) contacts substrate.

It belongs to the aspartate/glutamate racemases family.

It catalyses the reaction L-glutamate = D-glutamate. Its pathway is cell wall biogenesis; peptidoglycan biosynthesis. Its function is as follows. Provides the (R)-glutamate required for cell wall biosynthesis. In Clostridium botulinum (strain Kyoto / Type A2), this protein is Glutamate racemase.